Here is a 349-residue protein sequence, read N- to C-terminus: Shematrin-like protein 1 (349 aa).

An N-terminal signal peptide occupies residues 1–16 (MLKLVCAVFLIATVSA).

In terms of tissue distribution, prismatic layer of shell (at protein level).

Its subcellular location is the secreted. The sequence is that of Shematrin-like protein 1 from Margaritifera margaritifera (Freshwater pearl mussel).